A 2276-amino-acid polypeptide reads, in one-letter code: Poly [ADP-ribose] polymerase tankyrase (2276 aa).

Composition is skewed to basic residues over residues 1 to 15 and 87 to 98; these read MARR…VKAA and KAVKAPKVKAPS. Disordered regions lie at residues 1 to 20 and 79 to 103; these read MARR…KIDG and SSKT…KGND. ANK repeat units follow at residues 345–374, 378–407, 411–440, 461–490, 498–527, 531–560, 564–593, 598–627, 675–725, 729–758, 970–999, 1171–1200, 1204–1233, 1472–1501, and 1505–1535; these read KNIT…TINI, DNWY…SVTM, QTET…DLEK, SGNS…IVVD, NRLT…LVEG, KKRT…SLTL, SGNT…NILS, WQLY…KDKA, SGQT…KVDV, EDNT…NKRN, KDDV…EMHL, NGNT…HVDL, DGNT…DVTE, GLIP…SLKT, and YGRT…AVVL. The disordered stretch occupies residues 1570–1649; it reads VPARVESDEE…STGPKRKKLV (80 aa). 2 stretches are compositionally biased toward acidic residues: residues 1576–1590 and 1612–1622; these read SDEE…ESGE and SDDEDDDDDDS. One copy of the ANK 16 repeat lies at 1662 to 1706; the sequence is KENNPLHYFIEPLAWENVELLGDLAAANKTAIVQCLIDKRSPNPI. One can recognise a WGR domain in the interval 1788–1889; the sequence is GLVSFCDETQ…ANFRDMPKKY (102 aa). The 136-residue stretch at 1910-2045 folds into the PARP alpha-helical domain; it reads KNTEKDPIRR…EIETATRLLC (136 aa). Positions 2047–2276 constitute a PARP catalytic domain; sequence AEFRQDLDRV…VLPKYIVMYK (230 aa).

Expressed throughout the head and tail, in germ cells and somatic cells.

It is found in the nucleus. Its subcellular location is the chromosome. It catalyses the reaction NAD(+) + (ADP-D-ribosyl)n-acceptor = nicotinamide + (ADP-D-ribosyl)n+1-acceptor + H(+).. The catalysed reaction is L-aspartyl-[protein] + NAD(+) = 4-O-(ADP-D-ribosyl)-L-aspartyl-[protein] + nicotinamide. It carries out the reaction L-glutamyl-[protein] + NAD(+) = 5-O-(ADP-D-ribosyl)-L-glutamyl-[protein] + nicotinamide. Poly[ADP-ribose] polymerases modify various nuclear proteins by poly(ADP-ribosyl)ation, a post-translational modification synthesized after DNA damage that appears as an obligatory step in a detection/signaling pathway leading to the reparation of DNA strand breaks and programmed cell death. The protein is Poly [ADP-ribose] polymerase tankyrase of Caenorhabditis elegans.